A 280-amino-acid chain; its full sequence is ESX-1 secretion-associated protein EspJ (280 aa).

Phosphoserine is present on Ser-70. Composition is skewed to low complexity over residues 167 to 181 (QTIS…QSAQ) and 246 to 280 (PAQA…TTTL). Residues 167 to 280 (QTISQTAQQA…TPAPSTTTTL (114 aa)) are disordered.

In terms of processing, phosphorylated at Ser-70.

Its subcellular location is the secreted. Functionally, could be involved in regulation of growth and intracellular survival. The sequence is that of ESX-1 secretion-associated protein EspJ from Mycobacterium tuberculosis (strain CDC 1551 / Oshkosh).